Here is a 152-residue protein sequence, read N- to C-terminus: Deoxyuridine 5'-triphosphate nucleotidohydrolase (152 aa).

Substrate-binding positions include 70–72 (RSG), Asn-83, 87–89 (LID), and Met-97.

This sequence belongs to the dUTPase family. It depends on Mg(2+) as a cofactor.

It carries out the reaction dUTP + H2O = dUMP + diphosphate + H(+). It participates in pyrimidine metabolism; dUMP biosynthesis; dUMP from dCTP (dUTP route): step 2/2. Functionally, this enzyme is involved in nucleotide metabolism: it produces dUMP, the immediate precursor of thymidine nucleotides and it decreases the intracellular concentration of dUTP so that uracil cannot be incorporated into DNA. This Buchnera aphidicola subsp. Baizongia pistaciae (strain Bp) protein is Deoxyuridine 5'-triphosphate nucleotidohydrolase.